The chain runs to 80 residues: Sulfur carrier protein TusA (80 aa).

The Cysteine persulfide intermediate role is filled by Cys17.

It belongs to the sulfur carrier protein TusA family.

The protein localises to the cytoplasm. In terms of biological role, sulfur carrier protein which probably makes part of a sulfur-relay system. The chain is Sulfur carrier protein TusA from Pseudomonas putida (strain W619).